The primary structure comprises 661 residues: Ecdysteroid-phosphate phosphatase (661 aa).

Residues K16 to H57 enclose the UBA domain. Residues A235 to E300 form the SH3 domain. Residue R409 is part of the active site. The Tele-phosphohistidine intermediate role is filled by H410. Residue H590 is part of the active site.

As to quaternary structure, homodimer. Detected in non-diapause eggs, with highest expression between 2 and 5 days after oviposition. Not detected in other tissues tested.

The protein localises to the cytoplasm. It localises to the cytosol. It carries out the reaction ecdysone 22-phosphate + H2O = ecdysone + phosphate. The catalysed reaction is 20-hydroxyecdysone 22-phosphate + H2O = 20-hydroxyecdysone + phosphate. It catalyses the reaction 2-deoxyecdysone 22-phosphate + H2O = 2-deoxyecdysone + phosphate. The enzyme catalyses O-phospho-L-tyrosyl-[protein] + H2O = L-tyrosyl-[protein] + phosphate. Competitively inhibited by 4-nitrophenyl phosphate (para-nitrophenylphosphate, pNPP). Also inhibited by tungstate, vanadate, and phosphate. Steroid phosphatase which catalyzes the conversion of inactive phosphorylated ecdysteroids into their active forms. Shows high activity towards ecdysone 22-phosphate (E22P). Has lower activity towards other ecdysteriod phosphates including 20-hydroxyecdysone 22-phosphate (20E22P) and 2-deoxyecdysone 22-phosphate (2dE22P). Also has protein tyrosine phosphatase activity. The sequence is that of Ecdysteroid-phosphate phosphatase from Bombyx mori (Silk moth).